Reading from the N-terminus, the 503-residue chain is Trehalose-6-phosphate synthase (503 aa).

A compositionally biased stretch (polar residues) spans 1–14; that stretch reads MTDQSGNGVRSGSA. Residues 1-20 are disordered; sequence MTDQSGNGVRSGSASEAPPS. Arg31 contacts D-glucose 6-phosphate. A UDP-alpha-D-glucose-binding site is contributed by 51 to 52; that stretch reads GG. Positions 109 and 163 each coordinate D-glucose 6-phosphate. Positions 305 and 310 each coordinate UDP-alpha-D-glucose. Residue Arg343 coordinates D-glucose 6-phosphate. 408-412 is a binding site for UDP-alpha-D-glucose; sequence LVAKE.

Belongs to the glycosyltransferase 20 family. As to quaternary structure, homotetramer.

The enzyme catalyses ADP-alpha-D-glucose + D-glucose 6-phosphate = alpha,alpha-trehalose 6-phosphate + ADP + H(+). It catalyses the reaction CDP-alpha-D-glucose + D-glucose 6-phosphate = alpha,alpha-trehalose 6-phosphate + CDP + H(+). It carries out the reaction GDP-alpha-D-glucose + D-glucose 6-phosphate = alpha,alpha-trehalose 6-phosphate + GDP + H(+). The catalysed reaction is TDP-alpha-D-glucose + D-glucose 6-phosphate = 5-methyl-UDP + alpha,alpha-trehalose 6-phosphate + H(+). The enzyme catalyses D-glucose 6-phosphate + UDP-alpha-D-glucose = alpha,alpha-trehalose 6-phosphate + UDP + H(+). Its pathway is glycan biosynthesis; trehalose biosynthesis. In terms of biological role, probably involved in the osmoprotection via the biosynthesis of trehalose and in the production of glycogen and alpha-glucan via the TreS-Pep2 branch involved in the biosynthesis of maltose-1-phosphate (M1P). Catalyzes the transfer of glucose from UDP-glucose (UDP-Glc) to D-glucose 6-phosphate (Glc-6-P) to form trehalose-6-phosphate. Probably also able to use ADP-Glc, CDP-Glc, GDP-Glc and TDP-Glc as glucosyl donors. This is Trehalose-6-phosphate synthase from Mycolicibacterium gilvum (strain PYR-GCK) (Mycobacterium gilvum (strain PYR-GCK)).